A 230-amino-acid chain; its full sequence is RNA polymerase sigma factor FliA (230 aa).

The tract at residues 6–78 (LWQRYVPLVR…MLDELRSRDW (73 aa)) is sigma-70 factor domain-2. The Interaction with polymerase core subunit RpoC signature appears at 33–36 (DLLQ). The tract at residues 86 to 156 (NAREVASAMQ…VEPMLEGHED (71 aa)) is sigma-70 factor domain-3. Residues 175 to 223 (AIEALPEREKMVLTLYYQEELNLKEIGAVLEVGESRVSQLHSQAIKRLR) are sigma-70 factor domain-4. The H-T-H motif DNA-binding region spans 197–216 (LKEIGAVLEVGESRVSQLHS).

The protein belongs to the sigma-70 factor family. FliA subfamily.

The protein resides in the cytoplasm. In terms of biological role, sigma factors are initiation factors that promote the attachment of RNA polymerase to specific initiation sites and are then released. This sigma factor controls the expression of flagella-related genes. In Yersinia enterocolitica, this protein is RNA polymerase sigma factor FliA.